Consider the following 105-residue polypeptide: Pyrimidine/purine nucleoside phosphorylase (105 aa).

The protein belongs to the nucleoside phosphorylase PpnP family.

The catalysed reaction is a purine D-ribonucleoside + phosphate = a purine nucleobase + alpha-D-ribose 1-phosphate. It catalyses the reaction adenosine + phosphate = alpha-D-ribose 1-phosphate + adenine. It carries out the reaction cytidine + phosphate = cytosine + alpha-D-ribose 1-phosphate. The enzyme catalyses guanosine + phosphate = alpha-D-ribose 1-phosphate + guanine. The catalysed reaction is inosine + phosphate = alpha-D-ribose 1-phosphate + hypoxanthine. It catalyses the reaction thymidine + phosphate = 2-deoxy-alpha-D-ribose 1-phosphate + thymine. It carries out the reaction uridine + phosphate = alpha-D-ribose 1-phosphate + uracil. The enzyme catalyses xanthosine + phosphate = alpha-D-ribose 1-phosphate + xanthine. Functionally, catalyzes the phosphorolysis of diverse nucleosides, yielding D-ribose 1-phosphate and the respective free bases. Can use uridine, adenosine, guanosine, cytidine, thymidine, inosine and xanthosine as substrates. Also catalyzes the reverse reactions. This is Pyrimidine/purine nucleoside phosphorylase from Clostridioides difficile (strain 630) (Peptoclostridium difficile).